Consider the following 1574-residue polypeptide: RNA2 polyprotein (1574 aa).

A coiled-coil region spans residues 361-422 (ERVKAFSSHH…ERLRAAKEDR (62 aa)). Disordered stretches follow at residues 557–579 (PPPIITAPVGQRVGGNPPTETPG) and 863–916 (RSAT…RGYT).

Specific enzymatic cleavages by RNA1 encoded picornain 3C-like protease in vivo yield mature proteins.

It is found in the host cell junction. Its subcellular location is the host plasmodesma. It localises to the virion. Functionally, transports viral genome to neighboring plant cells directly through plasmosdesmata, without any budding. The movement protein allows efficient cell to cell propagation, by bypassing the host cell wall barrier. Acts by forming a tubular structure at the host plasmodesmata, enlarging it enough to allow free passage of virion capsids. In terms of biological role, capsid proteins form a capsid enclosing the viral positive strand RNA genome. Together they form an icosahedral capsid pseudo T=3 with a diameter of approximately 30 nm (Potential). In Citrus unshiu (Satsuma mandarin), this protein is RNA2 polyprotein.